The sequence spans 2890 residues: Bifunctional DNA-directed RNA polymerase subunit beta-beta' (2890 aa).

The tract at residues 1–1377 is DNA-directed RNA polymerase subunit beta; sequence MSKKIPLKNR…DINIFGDDVD (1377 aa). The DNA-directed RNA polymerase subunit beta' stretch occupies residues 1384 to 2890; that stretch reads PIVIKEDDRP…LRTLEDDPKF (1507 aa). Cysteine 1449, cysteine 1451, cysteine 1465, and cysteine 1468 together coordinate Zn(2+). Residues aspartate 1849, aspartate 1851, and aspartate 1853 each coordinate Mg(2+). Zn(2+) contacts are provided by cysteine 2179, cysteine 2253, cysteine 2260, and cysteine 2263.

The protein in the N-terminal section; belongs to the RNA polymerase beta chain family. It in the C-terminal section; belongs to the RNA polymerase beta' chain family. As to quaternary structure, the RNAP catalytic core consists of 2 alpha, 1 beta/beta' and 1 omega subunit. When a sigma factor is associated with the core the holoenzyme is formed, which can initiate transcription. Requires Mg(2+) as cofactor. Zn(2+) serves as cofactor.

The catalysed reaction is RNA(n) + a ribonucleoside 5'-triphosphate = RNA(n+1) + diphosphate. In terms of biological role, DNA-dependent RNA polymerase catalyzes the transcription of DNA into RNA using the four ribonucleoside triphosphates as substrates. This is Bifunctional DNA-directed RNA polymerase subunit beta-beta' (rpoBC) from Helicobacter pylori (strain Shi470).